We begin with the raw amino-acid sequence, 815 residues long: Patatin-like phospholipase domain-containing protein LELG_00944 (815 aa).

Positions 41 to 50 (VSTTAPTTPL) are enriched in polar residues. Disordered regions lie at residues 41-105 (VSTT…PQLK) and 140-166 (SENL…STSP). Residues 54 to 73 (LDMGDLSLLGGELGNGSDDV) are compositionally biased toward low complexity. Positions 74–94 (VVGDDDDDDDDDDDDDDDDDD) are enriched in acidic residues. The span at 148–160 (KRTKFAKSSKSSK) shows a compositional bias: basic residues. A helical membrane pass occupies residues 185–205 (WPILTFVVIWVTILGFLYLAV). The 193-residue stretch at 360–552 (LCLSGGACFA…RTDIPIDALN (193 aa)) folds into the PNPLA domain. Residues 391-395 (GTSGG) carry the GXSXG motif. Ser393 (nucleophile) is an active-site residue. Asp539 functions as the Proton acceptor in the catalytic mechanism. The segment at 753–815 (GSTLRDDDAD…LTKERRHTVY (63 aa)) is disordered. A compositionally biased stretch (acidic residues) spans 759-799 (DDADADVDEDDNEDEDEEDEDENDYEEYDVEDLDDPYESDA).

The protein belongs to the PLPL family.

It localises to the membrane. Its function is as follows. Probable lipid hydrolase. The chain is Patatin-like phospholipase domain-containing protein LELG_00944 from Lodderomyces elongisporus (strain ATCC 11503 / CBS 2605 / JCM 1781 / NBRC 1676 / NRRL YB-4239) (Yeast).